A 728-amino-acid polypeptide reads, in one-letter code: Cellulose synthase-like protein E6 (728 aa).

Transmembrane regions (helical) follow at residues 21–43 (AVYR…YRAT) and 53–73 (AAWL…VITQ). Catalysis depends on residues Asp141 and Asp446. 5 helical membrane passes run 523-543 (LWAA…LGLV), 546-566 (TPLF…VFCV), 646-666 (PEFV…VAGL), 669-689 (IMAG…LIVI), and 707-727 (IPLP…LLPI).

The protein belongs to the glycosyltransferase 2 family. Plant cellulose synthase-like E subfamily.

It is found in the golgi apparatus membrane. Its function is as follows. Thought to be a Golgi-localized beta-glycan synthase that polymerize the backbones of noncellulosic polysaccharides (hemicelluloses) of plant cell wall. This is Cellulose synthase-like protein E6 (CSLE6) from Oryza sativa subsp. japonica (Rice).